We begin with the raw amino-acid sequence, 237 residues long: Uridylate kinase (237 aa).

Residue K9–G12 coordinates ATP. The segment at G17–G22 is involved in allosteric activation by GTP. Residue G51 participates in UMP binding. G52 and R56 together coordinate ATP. UMP contacts are provided by residues D71 and C132–T139. The ATP site is built by T159, Y165, and D168.

It belongs to the UMP kinase family. As to quaternary structure, homohexamer.

The protein resides in the cytoplasm. It catalyses the reaction UMP + ATP = UDP + ADP. It participates in pyrimidine metabolism; CTP biosynthesis via de novo pathway; UDP from UMP (UMPK route): step 1/1. Its activity is regulated as follows. Allosterically activated by GTP. Inhibited by UTP. Its function is as follows. Catalyzes the reversible phosphorylation of UMP to UDP. This chain is Uridylate kinase, found in Synechococcus sp. (strain CC9605).